A 95-amino-acid polypeptide reads, in one-letter code: Large ribosomal subunit protein bL25 (95 aa).

Belongs to the bacterial ribosomal protein bL25 family. As to quaternary structure, part of the 50S ribosomal subunit; part of the 5S rRNA/L5/L18/L25 subcomplex. Contacts the 5S rRNA. Binds to the 5S rRNA independently of L5 and L18.

This is one of the proteins that binds to the 5S RNA in the ribosome where it forms part of the central protuberance. This is Large ribosomal subunit protein bL25 from Tolumonas auensis (strain DSM 9187 / NBRC 110442 / TA 4).